Here is a 95-residue protein sequence, read N- to C-terminus: Co-chaperonin GroES (95 aa).

This sequence belongs to the GroES chaperonin family. In terms of assembly, heptamer of 7 subunits arranged in a ring. Interacts with the chaperonin GroEL.

Its subcellular location is the cytoplasm. In terms of biological role, together with the chaperonin GroEL, plays an essential role in assisting protein folding. The GroEL-GroES system forms a nano-cage that allows encapsulation of the non-native substrate proteins and provides a physical environment optimized to promote and accelerate protein folding. GroES binds to the apical surface of the GroEL ring, thereby capping the opening of the GroEL channel. The chain is Co-chaperonin GroES from Bordetella avium (strain 197N).